The sequence spans 427 residues: 3-phosphoshikimate 1-carboxyvinyltransferase (427 aa).

3-phosphoshikimate-binding residues include Lys-22, Ser-23, and Arg-27. Residue Lys-22 coordinates phosphoenolpyruvate. Phosphoenolpyruvate-binding residues include Gly-96 and Arg-124. 3-phosphoshikimate contacts are provided by Ser-169, Ser-170, Gln-171, Ser-197, Asp-313, Asn-336, and Lys-340. Residue Gln-171 coordinates phosphoenolpyruvate. Asp-313 functions as the Proton acceptor in the catalytic mechanism. Phosphoenolpyruvate contacts are provided by Arg-344, Arg-386, and Lys-411.

This sequence belongs to the EPSP synthase family. As to quaternary structure, monomer.

The protein localises to the cytoplasm. The enzyme catalyses 3-phosphoshikimate + phosphoenolpyruvate = 5-O-(1-carboxyvinyl)-3-phosphoshikimate + phosphate. The protein operates within metabolic intermediate biosynthesis; chorismate biosynthesis; chorismate from D-erythrose 4-phosphate and phosphoenolpyruvate: step 6/7. In terms of biological role, catalyzes the transfer of the enolpyruvyl moiety of phosphoenolpyruvate (PEP) to the 5-hydroxyl of shikimate-3-phosphate (S3P) to produce enolpyruvyl shikimate-3-phosphate and inorganic phosphate. The polypeptide is 3-phosphoshikimate 1-carboxyvinyltransferase (Shigella flexneri serotype 5b (strain 8401)).